The sequence spans 341 residues: Heme A synthase (341 aa).

5 consecutive transmembrane segments (helical) span residues 11–31 (AVST…IIGG), 101–121 (LIGL…HLSA), 127–147 (LFGL…MVAS), 160–180 (LATH…FSLE), and 194–214 (AGVT…GAFV). Residue H259 participates in heme binding. The next 3 helical transmembrane spans lie at 261–278 (WTGY…WQVW), 288–308 (FMVI…AALL), and 315–335 (LSLA…AAAW). H319 contacts heme.

Belongs to the COX15/CtaA family. Type 2 subfamily. In terms of assembly, interacts with CtaB. The cofactor is heme b.

It localises to the cell membrane. It catalyses the reaction Fe(II)-heme o + 2 A + H2O = Fe(II)-heme a + 2 AH2. Its pathway is porphyrin-containing compound metabolism; heme A biosynthesis; heme A from heme O: step 1/1. Catalyzes the conversion of heme O to heme A by two successive hydroxylations of the methyl group at C8. The first hydroxylation forms heme I, the second hydroxylation results in an unstable dihydroxymethyl group, which spontaneously dehydrates, resulting in the formyl group of heme A. The sequence is that of Heme A synthase from Maricaulis maris (strain MCS10) (Caulobacter maris).